An 868-amino-acid polypeptide reads, in one-letter code: uncharacterized protein (868 aa).

The protein resides in the cytoplasm. It is found in the nucleus. This is an uncharacterized protein from Schizosaccharomyces pombe (strain 972 / ATCC 24843) (Fission yeast).